A 173-amino-acid chain; its full sequence is Putative pre-16S rRNA nuclease (173 aa).

It belongs to the YqgF nuclease family.

Its subcellular location is the cytoplasm. Functionally, could be a nuclease involved in processing of the 5'-end of pre-16S rRNA. The chain is Putative pre-16S rRNA nuclease from Psychrobacter cryohalolentis (strain ATCC BAA-1226 / DSM 17306 / VKM B-2378 / K5).